We begin with the raw amino-acid sequence, 359 residues long: Putative cyclin-F1-2 (359 aa).

The protein belongs to the cyclin family. Cyclin F subfamily.

The protein is Putative cyclin-F1-2 (CYCF1-2) of Oryza sativa subsp. japonica (Rice).